The following is a 728-amino-acid chain: Catalase-peroxidase (728 aa).

The segment at residues 91–218 (WHSAGTYRTA…LAAVQMGLIY (128 aa)) is a cross-link (tryptophyl-tyrosyl-methioninium (Trp-Tyr) (with M-244)). The active-site Proton acceptor is H92. Positions 218-244 (YVNPEGPDGNPDPVAAARDIRDTFARM) form a cross-link, tryptophyl-tyrosyl-methioninium (Tyr-Met) (with W-91). H259 serves as a coordination point for heme b.

The protein belongs to the peroxidase family. Peroxidase/catalase subfamily. As to quaternary structure, homodimer or homotetramer. Heme b serves as cofactor. Formation of the three residue Trp-Tyr-Met cross-link is important for the catalase, but not the peroxidase activity of the enzyme.

It carries out the reaction H2O2 + AH2 = A + 2 H2O. The catalysed reaction is 2 H2O2 = O2 + 2 H2O. Its function is as follows. Bifunctional enzyme with both catalase and broad-spectrum peroxidase activity. In Burkholderia mallei (strain NCTC 10247), this protein is Catalase-peroxidase.